A 324-amino-acid polypeptide reads, in one-letter code: Lignin-forming anionic peroxidase (324 aa).

A signal peptide spans 1-22; it reads MSFLRFVGAILFLVAIFGASNA. A Pyrrolidone carboxylic acid modification is found at Q23. Cystine bridges form between C33/C111, C66/C71, C117/C320, and C196/C228. N35 carries N-linked (GlcNAc...) asparagine glycosylation. H64 acts as the Proton acceptor in catalysis. Ca(2+) is bound by residues D65, V68, G70, D72, and S74. A glycan (N-linked (GlcNAc...) asparagine) is linked at N150. Residue P159 participates in substrate binding. A heme b-binding site is contributed by H189. T190 serves as a coordination point for Ca(2+). An N-linked (GlcNAc...) asparagine glycan is attached at N207. Residues D242, T245, and D250 each contribute to the Ca(2+) site.

It belongs to the peroxidase family. Classical plant (class III) peroxidase subfamily. The cofactor is Ca(2+). Heme b serves as cofactor.

The protein resides in the secreted. The enzyme catalyses 2 a phenolic donor + H2O2 = 2 a phenolic radical donor + 2 H2O. In terms of biological role, removal of H(2)O(2), oxidation of toxic reductants, biosynthesis and degradation of lignin, suberization, auxin catabolism, response to environmental stresses such as wounding, pathogen attack and oxidative stress. These functions might be dependent on each isozyme/isoform in each plant tissue. Plays an integral role in secondary cell wall biosynthesis by the polymerization of cinnamyl alcohols into lignin and by forming rigid cross-links between cellulose, pectin, hydroxy-proline-rich glycoproteins, and lignin. The protein is Lignin-forming anionic peroxidase of Nicotiana tabacum (Common tobacco).